The sequence spans 422 residues: Solanesyl diphosphate synthase 3, chloroplastic/mitochondrial (422 aa).

A chloroplast and mitochondrion-targeting transit peptide spans 1–32; sequence MLFTRSVARISSKFLRNRSFYGSSQSLASHRF. Isopentenyl diphosphate-binding residues include lysine 125, arginine 128, and histidine 174. Mg(2+)-binding residues include aspartate 181 and aspartate 185. Position 190 (arginine 190) interacts with an all-trans-polyprenyl diphosphate. Position 191 (arginine 191) interacts with isopentenyl diphosphate. 4 residues coordinate an all-trans-polyprenyl diphosphate: lysine 267, threonine 268, glutamine 305, and lysine 322.

This sequence belongs to the FPP/GGPP synthase family. Homodimer. Mg(2+) serves as cofactor. In terms of tissue distribution, ubiquitous. Highest expression in seeds and shoot apical meristem.

The protein resides in the plastid. It localises to the chloroplast. It is found in the mitochondrion. It catalyses the reaction 5 isopentenyl diphosphate + (2E,6E,10E)-geranylgeranyl diphosphate = all-trans-nonaprenyl diphosphate + 5 diphosphate. Functionally, may be involved in the supply of solanesyl diphosphate for ubiquinone-9 (UQ-9) biosynthesis in mitochondria. Synthesizes C25 to C45 medium / long-chain products depending on the type of substrate available. Can use geranyl diphosphate, farnesyl diphosphate or geranylgeranyl diphosphate as substrates, but not dimethylallyl diphosphate. This Arabidopsis thaliana (Mouse-ear cress) protein is Solanesyl diphosphate synthase 3, chloroplastic/mitochondrial.